Here is a 224-residue protein sequence, read N- to C-terminus: Prothoracicotropic hormone (224 aa).

The signal sequence occupies residues 1–29 (MITRPIILVILCYAILMIVQSFVPKAVAL). 3 disulfide bridges follow: Cys-132-Cys-169, Cys-155-Cys-211, and Cys-163-Cys-213. The N-linked (GlcNAc...) asparagine glycan is linked to Asn-156.

As to quaternary structure, homodimer; disulfide-linked. PTTH is synthesized by two dorsolateral neurosecretory cells of the Bombyx brain.

PTTH is a brain secretory polypeptide of insects which stimulates the prothoracic glands to produce and release ecdysone, the steroid essential to insect development. Its function is as follows. Peptides P2K and P6K are presumed to be cleaved post-translationally and may play some unknown physiologically or developmentally important functions. The chain is Prothoracicotropic hormone from Bombyx mori (Silk moth).